Consider the following 205-residue polypeptide: Small ribosomal subunit protein uS4c (205 aa).

In terms of domain architecture, S4 RNA-binding spans M93–Q154.

The protein belongs to the universal ribosomal protein uS4 family. Part of the 30S ribosomal subunit. Contacts protein S5. The interaction surface between S4 and S5 is involved in control of translational fidelity.

It localises to the plastid. The protein localises to the chloroplast. Its function is as follows. One of the primary rRNA binding proteins, it binds directly to 16S rRNA where it nucleates assembly of the body of the 30S subunit. With S5 and S12 plays an important role in translational accuracy. This chain is Small ribosomal subunit protein uS4c (rps4), found in Chaetosphaeridium globosum (Charophycean green alga).